The sequence spans 207 residues: PITH domain-containing protein P35G2.02 (207 aa).

The 177-residue stretch at 13–189 (EHPFESGPND…PVVTIYEATP (177 aa)) folds into the PITH domain.

Belongs to the PITHD1 family.

It is found in the cytoplasm. It localises to the nucleus. The protein is PITH domain-containing protein P35G2.02 of Schizosaccharomyces pombe (strain 972 / ATCC 24843) (Fission yeast).